Reading from the N-terminus, the 208-residue chain is Elongation factor Ts, chloroplastic (208 aa).

Belongs to the EF-Ts family.

Its subcellular location is the plastid. The protein localises to the chloroplast. Functionally, associates with the EF-Tu.GDP complex and induces the exchange of GDP to GTP. It remains bound to the aminoacyl-tRNA.EF-Tu.GTP complex up to the GTP hydrolysis stage on the ribosome. This chain is Elongation factor Ts, chloroplastic (tsf), found in Cyanidium caldarium (Red alga).